Reading from the N-terminus, the 201-residue chain is Small ribosomal subunit protein uS4 (201 aa).

The S4 RNA-binding domain occupies 91-155 (TRLDNVVYRA…STLPFQVARE (65 aa)).

This sequence belongs to the universal ribosomal protein uS4 family. Part of the 30S ribosomal subunit. Contacts protein S5. The interaction surface between S4 and S5 is involved in control of translational fidelity.

Functionally, one of the primary rRNA binding proteins, it binds directly to 16S rRNA where it nucleates assembly of the body of the 30S subunit. With S5 and S12 plays an important role in translational accuracy. This chain is Small ribosomal subunit protein uS4, found in Nocardia farcinica (strain IFM 10152).